A 64-amino-acid chain; its full sequence is DNA-binding protein 7 (64 aa).

An N6-methyllysine mark is found at lysine 5 and lysine 7.

Belongs to the 7 kDa DNA-binding/endoribonuclease P2 family. As to quaternary structure, monomer.

It is found in the cytoplasm. Functionally, can constrain negative DNA supercoils. May be involved in maintaining the integrity of the genome at high temperature. This chain is DNA-binding protein 7, found in Sulfurisphaera tokodaii (strain DSM 16993 / JCM 10545 / NBRC 100140 / 7) (Sulfolobus tokodaii).